The chain runs to 142 residues: Large ribosomal subunit protein bL17 (142 aa).

It belongs to the bacterial ribosomal protein bL17 family. Part of the 50S ribosomal subunit. Contacts protein L32.

The sequence is that of Large ribosomal subunit protein bL17 from Methylocella silvestris (strain DSM 15510 / CIP 108128 / LMG 27833 / NCIMB 13906 / BL2).